The following is a 745-amino-acid chain: Copper-transporting ATPase (745 aa).

The HMA domain maps to 1–67 (MKESFYIEGM…LIEKLGYSPK (67 aa)). At 1–83 (MKESFYIEGM…KKEFFSPNVK (83 aa)) the chain is on the cytoplasmic side. The Cu cation site is built by Cys12 and Cys15. A helical membrane pass occupies residues 84–104 (LALAVIFTLFVVYLSMGAMLS). The Extracellular portion of the chain corresponds to 105–124 (PSLLPESLLAIDNHSNFLNA). Residues 125–144 (CLQLIGALIVMHLGRDFYIQ) traverse the membrane as a helical segment. Residues 145–151 (GFKALWH) are Cytoplasmic-facing. The helical transmembrane segment at 152-172 (RQPNMSSLIAIGTSAALISSL) threads the bilayer. At 173 to 194 (WQLYLVYTNHYTDQWSYGHYYF) the chain is on the extracellular side. The chain crosses the membrane as a helical span at residues 195–215 (ESVCVILMFVMVGKRIENVSK). The Cytoplasmic segment spans residues 216 to 343 (DKALDAMQAL…KAEISRLADK (128 aa)). Residues 344–366 (VSSVFVPSVIAISILAFVVWLII) form a helical membrane-spanning segment. At 367–379 (APKPDFWWNFGIA) the chain is on the extracellular side. A helical transmembrane segment spans residues 380–397 (LEVFVSVLVISCPCALGL). The Cytoplasmic portion of the chain corresponds to 398-685 (ATPMSILVAN…KLSQATIKNI (288 aa)). Residue Asp435 is the 4-aspartylphosphate intermediate of the active site. Asp631 and Asp635 together coordinate Mg(2+). A helical transmembrane segment spans residues 686 to 705 (KENLFWAFCYNSVFIPLACG). The Extracellular portion of the chain corresponds to 706-716 (VLYKANLMLSP). Residues 717–735 (AIAGLAMSLSSVSVVLNSQ) form a helical membrane-spanning segment. Topologically, residues 736–745 (RLRNFKIKDH) are cytoplasmic.

It belongs to the cation transport ATPase (P-type) (TC 3.A.3) family. Type IB subfamily.

It is found in the cell membrane. The enzyme catalyses Cu(2+)(in) + ATP + H2O = Cu(2+)(out) + ADP + phosphate + H(+). Functionally, probably involved in copper export. In Helicobacter pylori (strain ATCC 700392 / 26695) (Campylobacter pylori), this protein is Copper-transporting ATPase (copA).